Consider the following 993-residue polypeptide: General transcription factor II-I repeat domain-containing protein 1 (993 aa).

GTF2I-like repeat units follow at residues Leu-117 to Ser-211 and Leu-332 to Thr-426. The interval Gly-461–Glu-480 is disordered. GTF2I-like repeat units lie at residues Asp-597–Cys-691, Leu-727–Asp-821, and Ala-824–Glu-918. The tract at residues Cys-916 to Pro-961 is disordered. Residues Pro-929–Val-936 carry the Nuclear localization signal motif. Residues Glu-938–Pro-961 show a composition bias toward low complexity.

Belongs to the TFII-I family. Interacts (via repeats 4-5) with foxh1/fast1 (via Fork-head domain). Interacts with smad2 and smad3 (via MH1 domain) in a ligand (activin)-dependent manner. Interacts with pou5f1.1/oct-25 to form a repression complex on the promoters of the gsc and mix2 genes. Uniformly expressed in the embryo in pre- and early gastrula stages. Enriched in the head region of early neurula through tailbud stages.

It localises to the nucleus. Its function is as follows. Transcription factor that activates a subset of organizer-specific genes. Binds to the distal element (DE) of the gsc promoter to regulate its expression. In the presence of pou5f1.1/oct-25, forms a repression complex on the promoter of the gsc and mix2 genes to inhibit their transcription. This is General transcription factor II-I repeat domain-containing protein 1 (gtf2ird1) from Xenopus laevis (African clawed frog).